A 756-amino-acid chain; its full sequence is Pro-neuregulin-2, membrane-bound isoform (756 aa).

Positions 1 to 19 (MRRDPAPGFSMLLFGVSLA) are excised as a propeptide. At 20 to 315 (CYSPSLKSVQ…KEAEELYQKR (296 aa)) the chain is on the extracellular side. N55, N186, and N254 each carry an N-linked (GlcNAc...) asparagine glycan. In terms of domain architecture, Ig-like C2-type spans 145–240 (PKLKKMKSQT…RGRLHVNSVS (96 aa)). Intrachain disulfides connect C165/C219, C253/C267, C261/C278, and C280/C289. The region spanning 249–290 (HARKCNETAKSYCVNGGVCYYIEGINQLSCKCPVGYTGDRCQ) is the EGF-like domain. N296 is a glycosylation site (N-linked (GlcNAc...) asparagine). A helical transmembrane segment spans residues 316–336 (VLTITGICVALLVVGIVCVVA). The Cytoplasmic portion of the chain corresponds to 337 to 756 (YCKTKKQRRQ…TRAKQDSGPL (420 aa)). Disordered stretches follow at residues 402 to 439 (TFSG…SESL), 557 to 578 (LLRH…DMQR), 608 to 694 (ASPF…DGAL), and 711 to 756 (LRSD…SGPL). Over residues 404–416 (SGSHSCSPSHHCS) the composition is skewed to low complexity. Residues 424–437 (HRHESHTWSLERSE) are compositionally biased toward basic and acidic residues. Residues 654–682 (LNGLAAQRARAARDSLSLSSGSGCGSASA) are compositionally biased toward low complexity.

This sequence belongs to the neuregulin family. Interacts with ERBB3 and ERBB4. In terms of processing, proteolytic cleavage close to the plasma membrane on the external face leads to the release of the soluble growth factor form. Extensive glycosylation precedes the proteolytic cleavage. As to expression, highest expression in the brain, with lower levels in the lung. In the cerebellum, found in granule and Purkinje cells.

The protein resides in the cell membrane. It localises to the secreted. In terms of biological role, direct ligand for ERBB3 and ERBB4 tyrosine kinase receptors. Concomitantly recruits ERBB1 and ERBB2 coreceptors, resulting in ligand-stimulated tyrosine phosphorylation and activation of the ERBB receptors. May also promote the heterodimerization with the EGF receptor. The protein is Pro-neuregulin-2, membrane-bound isoform (Nrg2) of Mus musculus (Mouse).